The chain runs to 933 residues: Thyroid peroxidase (933 aa).

Positions 1-18 (MRALAVLSVTLVMACTEA) are cleaved as a signal peptide. Over 19-846 (FFPFISRGKE…TCVDSGRLPR (828 aa)) the chain is Extracellular. N-linked (GlcNAc...) asparagine glycosylation occurs at N129. A disulfide bridge connects residues C142 and C158. A heme b-binding site is contributed by D238. H239 serves as the catalytic Proton acceptor. D240 lines the Ca(2+) pocket. 2 cysteine pairs are disulfide-bonded: C259–C269 and C263–C286. The N-linked (GlcNAc...) asparagine glycan is linked to N307. Residues T321, F323, D325, and S327 each contribute to the Ca(2+) site. Residue N342 is glycosylated (N-linked (GlcNAc...) asparagine). Heme b contacts are provided by E399 and H494. A glycan (N-linked (GlcNAc...) asparagine) is linked at N569. Disulfide bonds link C598/C655 and C696/C721. Positions 740–795 (DKCGFPESVENGDFVHCEESGRRVLVYSCRHGYELQGREQLTCTQEGWDFQPPLCK) constitute a Sushi domain. Residues 796–839 (DVNECADGAHPPCHASARCRNTKGGFQCLCADPYELGDDGRTCV) form the EGF-like; calcium-binding domain. 3 disulfide bridges follow: C800-C814, C808-C823, and C825-C838. A helical transmembrane segment spans residues 847 to 871 (VTWISMSLAALLIGGFAGLTSTVIC). Residues 872–933 (RWTRTGTKST…RDTHRLPRAL (62 aa)) lie on the Cytoplasmic side of the membrane. Residues 881-933 (TLPISETGGGTPELRCGKHQAVGTSPQRAAAQDSEQESAGMEGRDTHRLPRAL) form a disordered region. A compositionally biased stretch (basic and acidic residues) spans 922–933 (EGRDTHRLPRAL).

This sequence belongs to the peroxidase family. XPO subfamily. Interacts with DUOX1, DUOX2 and CYBA. Ca(2+) is required as a cofactor. It depends on heme b as a cofactor. Post-translationally, glycosylated. Heme is covalently bound through a H(2)O(2)-dependent autocatalytic process. Heme insertion is important for the delivery of protein at the cell surface. In terms of processing, cleaved in its N-terminal part.

The protein resides in the membrane. The protein localises to the cell surface. It catalyses the reaction 2 iodide + H2O2 + 2 H(+) = diiodine + 2 H2O. It carries out the reaction [thyroglobulin]-L-tyrosine + iodide + H2O2 + H(+) = [thyroglobulin]-3-iodo-L-tyrosine + 2 H2O. The catalysed reaction is [thyroglobulin]-3-iodo-L-tyrosine + iodide + H2O2 + H(+) = [thyroglobulin]-3,5-diiodo-L-tyrosine + 2 H2O. The enzyme catalyses 2 [thyroglobulin]-3,5-diiodo-L-tyrosine + H2O2 = [thyroglobulin]-L-thyroxine + [thyroglobulin]-dehydroalanine + 2 H2O. It catalyses the reaction [thyroglobulin]-3-iodo-L-tyrosine + [thyroglobulin]-3,5-diiodo-L-tyrosine + H2O2 = [thyroglobulin]-3,3',5-triiodo-L-thyronine + [thyroglobulin]-dehydroalanine + 2 H2O. Its pathway is hormone biosynthesis; thyroid hormone biosynthesis. In terms of biological role, iodination and coupling of the hormonogenic tyrosines in thyroglobulin to yield the thyroid hormones T(3) and T(4). This chain is Thyroid peroxidase, found in Homo sapiens (Human).